The following is an 852-amino-acid chain: Lon protease homolog 2, peroxisomal (852 aa).

N-acetylserine is present on Ser2. The region spanning 13–222 (LPLLLTHEGV…MTIPLLVRQI (210 aa)) is the Lon N-terminal domain. 375 to 382 (GPPGVGKT) is an ATP binding site. The Lon proteolytic domain occupies 651-837 (LSQPGVAIGL…DEVLNAAFDG (187 aa)). Catalysis depends on residues Ser743 and Lys786. The Microbody targeting signal signature appears at 850 to 852 (SKL).

This sequence belongs to the peptidase S16 family. Interacts with PEX5. Interacts with TYSND1. May interact with enzymes involved in beta-oxidation of fatty acids, including ACOX1/AOX. In terms of tissue distribution, widely expressed, with high levels in the liver, kidney and pancreas.

It is found in the peroxisome matrix. The enzyme catalyses Hydrolysis of proteins in presence of ATP.. ATP-dependent serine protease that mediates the selective degradation of misfolded and unassembled polypeptides in the peroxisomal matrix. Necessary for type 2 peroxisome targeting signal (PTS2)-containing protein processing and facilitates peroxisome matrix protein import. May indirectly regulate peroxisomal fatty acid beta-oxidation through degradation of the self-processed forms of TYSND1. This is Lon protease homolog 2, peroxisomal from Homo sapiens (Human).